A 432-amino-acid chain; its full sequence is Mannan endo-1,4-beta-mannosidase 1 (432 aa).

An N-terminal signal peptide occupies residues 1-28 (MRLLGAHRAALLVLACVVVVVIHGLGEA). Substrate-binding residues include Trp-93 and Asn-209. Glu-210 (proton donor) is an active-site residue. Tyr-289 lines the substrate pocket. The Nucleophile role is filled by Glu-329. Residue Trp-371 participates in substrate binding.

Belongs to the glycosyl hydrolase 5 (cellulase A) family. As to expression, ubiquitous.

It localises to the secreted. The catalysed reaction is Random hydrolysis of (1-&gt;4)-beta-D-mannosidic linkages in mannans, galactomannans and glucomannans.. In Oryza sativa subsp. japonica (Rice), this protein is Mannan endo-1,4-beta-mannosidase 1 (MAN1).